The following is a 415-amino-acid chain: Mulatexin (415 aa).

A signal peptide spans Met-1–Ala-21. Residues Glu-23 to Ser-66 enclose the Chitin-binding type-1 1 domain. Intrachain disulfides connect Cys-26–Cys-41, Cys-35–Cys-47, Cys-40–Cys-54, and Cys-60–Cys-64. The disordered stretch occupies residues Trp-65 to Arg-127. The span at Ser-67–Pro-121 shows a compositional bias: pro residues. The Chitin-binding type-1 2 domain occupies Asp-125–Asn-167. 4 disulfide bridges follow: Cys-128–Cys-143, Cys-137–Cys-149, Cys-142–Cys-156, and Cys-161–Cys-165. Asn-264 carries an N-linked (GlcNAc...) asparagine glycan.

Glycosylated.

The protein resides in the secreted. In terms of biological role, chitin-binding protein which slows larval growth when consumed by the lepidopteran species S.ricini and M.brassica, but not when consumed by the mulberry specialist B.mori. Lacks chitinase activity. The chain is Mulatexin from Morus alba (White mulberry).